Consider the following 58-residue polypeptide: UPF0434 protein Daro_3207 (58 aa).

This sequence belongs to the UPF0434 family.

This Dechloromonas aromatica (strain RCB) protein is UPF0434 protein Daro_3207.